The primary structure comprises 84 residues: Small ribosomal subunit protein uS17 (84 aa).

This sequence belongs to the universal ribosomal protein uS17 family. As to quaternary structure, part of the 30S ribosomal subunit.

One of the primary rRNA binding proteins, it binds specifically to the 5'-end of 16S ribosomal RNA. This chain is Small ribosomal subunit protein uS17, found in Serratia proteamaculans (strain 568).